The sequence spans 434 residues: MKVIILGGGVIGVTSAWYLVQQGHEVIVVDRQSSAAEETSAGNAGQISPGYATPWGAPGIPLKAVKWMFQKHAPLAIRPDGSLFQLRWMWQMLRNCDASHYAMNKSRMVRIAEYSRDCIRQLRQDTGIEYEGRQGGTLQLFRDQKQFDNAANDIAVLKQEGVAYELLTAEQLKSAEPALEHVSHKLTGGLRLPNDETGDCQIFTKKLAKMAEEAGVTFLFNKEIKHLLFDGDKVTGVQCHDGLLTADHYVVAMGSYSTEFLKNKITIPVYPLKGYSLTMPIIDASRAPTSTILDETYKIAVTRFDNRIRVGGMAEVVGFNLNILKSRCETLKMVVQDLYEGGGDISKATFWTGLRPMTPDGTPIVGPTAYRNLSLNTGHGTLGWTMACGSGQLLADLISGNKTAIAADDLSVFRYIDGFNTKLLRPGQKLDAVY.

An FAD-binding site is contributed by 3–17 (VIILGGGVIGVTSAW).

Belongs to the DadA oxidoreductase family. Requires FAD as cofactor.

The enzyme catalyses a D-alpha-amino acid + A + H2O = a 2-oxocarboxylate + AH2 + NH4(+). It participates in amino-acid degradation; D-alanine degradation; NH(3) and pyruvate from D-alanine: step 1/1. Oxidative deamination of D-amino acids. The polypeptide is D-amino acid dehydrogenase (Proteus mirabilis (strain HI4320)).